Consider the following 206-residue polypeptide: MKCDVKTLDGKDAGSIELSDSVFGLPVRTDLLHRMVRWQLARRQAGTHKTKGISEISGTTAKPFKQKGTGHARQGSKRSPQFRGGATIFGPVVRSHAHDLNKKVRKLGLKTALSAKAQAGQLIVLDQAISESGKTKDLLAQLKVLGLEKVLFIDGPEVNEKFALAARNIIGLDVLPQQGANVYDILRRDTLVLTKEAVKHLEERLQ.

Residues 60–84 form a disordered region; the sequence is TAKPFKQKGTGHARQGSKRSPQFRG. The segment covering 64–76 has biased composition (basic residues); sequence FKQKGTGHARQGS.

The protein belongs to the universal ribosomal protein uL4 family. In terms of assembly, part of the 50S ribosomal subunit.

In terms of biological role, one of the primary rRNA binding proteins, this protein initially binds near the 5'-end of the 23S rRNA. It is important during the early stages of 50S assembly. It makes multiple contacts with different domains of the 23S rRNA in the assembled 50S subunit and ribosome. Its function is as follows. Forms part of the polypeptide exit tunnel. The protein is Large ribosomal subunit protein uL4 of Rhodospirillum rubrum (strain ATCC 11170 / ATH 1.1.1 / DSM 467 / LMG 4362 / NCIMB 8255 / S1).